A 426-amino-acid chain; its full sequence is Serine--tRNA ligase (426 aa).

Residue 229–231 (TAE) coordinates L-serine. An ATP-binding site is contributed by 260–262 (RSE). Glu283 lines the L-serine pocket. 347–350 (EIAS) lines the ATP pocket. Ser383 is a binding site for L-serine.

The protein belongs to the class-II aminoacyl-tRNA synthetase family. Type-1 seryl-tRNA synthetase subfamily. As to quaternary structure, homodimer. The tRNA molecule binds across the dimer.

It localises to the cytoplasm. It catalyses the reaction tRNA(Ser) + L-serine + ATP = L-seryl-tRNA(Ser) + AMP + diphosphate + H(+). The catalysed reaction is tRNA(Sec) + L-serine + ATP = L-seryl-tRNA(Sec) + AMP + diphosphate + H(+). The protein operates within aminoacyl-tRNA biosynthesis; selenocysteinyl-tRNA(Sec) biosynthesis; L-seryl-tRNA(Sec) from L-serine and tRNA(Sec): step 1/1. Its function is as follows. Catalyzes the attachment of serine to tRNA(Ser). Is also able to aminoacylate tRNA(Sec) with serine, to form the misacylated tRNA L-seryl-tRNA(Sec), which will be further converted into selenocysteinyl-tRNA(Sec). This is Serine--tRNA ligase from Rickettsia bellii (strain RML369-C).